Consider the following 524-residue polypeptide: Translation initiation factor eIF2B subunit delta (524 aa).

Residues 1-173 form a disordered region; it reads MATAAVAVRE…ERQQVPTRKD (173 aa). An N-acetylalanine modification is found at alanine 2. Serine 12 carries the phosphoserine modification. The span at 26–40 shows a compositional bias: basic and acidic residues; that stretch reads AEGREMTQEEKLQLR. The span at 41–51 shows a compositional bias: basic residues; the sequence is KEKKQQKKKRK. Threonine 86 is subject to Phosphothreonine. Composition is skewed to basic and acidic residues over residues 87-121 and 161-173; these read AKEK…RKGD and KKPE…TRKD. A may bind the chemical integrated stress response (ISR) inhibitor ISRIB region spans residues 171-180; the sequence is RKDYGSKVSL.

Belongs to the eIF-2B alpha/beta/delta subunits family. In terms of assembly, component of the translation initiation factor 2B (eIF2B) complex which is a heterodecamer of two sets of five different subunits: alpha, beta, gamma, delta and epsilon. Subunits alpha, beta and delta comprise a regulatory subcomplex and subunits epsilon and gamma comprise a catalytic subcomplex. Within the complex, the hexameric regulatory complex resides at the center, with the two heterodimeric catalytic subcomplexes bound on opposite sides.

It localises to the cytoplasm. The protein localises to the cytosol. Its activity is regulated as follows. Activated by the chemical integrated stress response (ISR) inhibitor ISRIB which stimulates guanine nucleotide exchange factor activity for both phosphorylated and unphosphorylated eIF2. Functionally, acts as a component of the translation initiation factor 2B (eIF2B) complex, which catalyzes the exchange of GDP for GTP on eukaryotic initiation factor 2 (eIF2) gamma subunit. Its guanine nucleotide exchange factor activity is repressed when bound to eIF2 complex phosphorylated on the alpha subunit, thereby limiting the amount of methionyl-initiator methionine tRNA available to the ribosome and consequently global translation is repressed. This is Translation initiation factor eIF2B subunit delta (EIF2B4) from Bos taurus (Bovine).